We begin with the raw amino-acid sequence, 346 residues long: 3 beta-hydroxysteroid dehydrogenase/Delta 5--&gt;4-isomerase (346 aa).

Tyr-147 serves as the catalytic Proton acceptor. Lys-151 contacts NAD(+).

Belongs to the 3-beta-HSD family.

The enzyme catalyses a 3beta-hydroxy-Delta(5)-steroid + NAD(+) = a 3-oxo-Delta(5)-steroid + NADH + H(+). It catalyses the reaction a 3-oxo-Delta(5)-steroid = a 3-oxo-Delta(4)-steroid. Its pathway is lipid metabolism; steroid biosynthesis. In terms of biological role, catalyzes the oxidative conversion of Delta(5)-ene-3-beta-hydroxy steroid, and the oxidative conversion of ketosteroids. The 3-beta-HSD enzymatic system plays a crucial role in the biosynthesis of all classes of hormonal steroids. During viral infection, steroid production contributes to virulence by inhibiting the host inflammatory response. This chain is 3 beta-hydroxysteroid dehydrogenase/Delta 5--&gt;4-isomerase (OPG174), found in Vaccinia virus (strain Western Reserve) (VACV).